Consider the following 890-residue polypeptide: DNA mismatch repair protein MutS (890 aa).

Residue 607–614 coordinates ATP; sequence GPNMSGKS. The tract at residues 832 to 851 is disordered; the sequence is ESQLSFFGTEQSSKKQDKPV.

The protein belongs to the DNA mismatch repair MutS family.

In terms of biological role, this protein is involved in the repair of mismatches in DNA. It is possible that it carries out the mismatch recognition step. This protein has a weak ATPase activity. The protein is DNA mismatch repair protein MutS of Bacillus cereus (strain 03BB102).